The sequence spans 566 residues: Mucin-21 (566 aa).

Residues 1–24 form the signal peptide; it reads MKMQKGNVLLMFGLLLHLEAATNS. Asn-25 carries an N-linked (GlcNAc...) asparagine glycan. Positions 25–68 are disordered; that stretch reads NETSTSANTGSSVISSGASTATNSGSSVTSSGVSTATISGSSVT. At 25-479 the chain is on the extracellular side; it reads NETSTSANTG…KPGGSLVPWE (455 aa). A run of 28 repeats spans residues 31-44, 45-59, 60-74, 75-89, 90-104, 105-119, 120-134, 135-149, 150-164, 165-179, 180-194, 195-209, 210-224, 225-239, 244-254, 255-269, 270-284, 285-299, 300-314, 315-329, 330-344, 345-359, 360-374, 375-389, 390-404, 405-419, 420-434, and 435-449. The 28 X 15 AA approximate tandem repeats stretch occupies residues 31–435; that stretch reads ANTGSSVISS…STTSSGANTA (405 aa). Residues 106–456 form a disordered region; it reads TNSESSTTSS…SGTAALTGMH (351 aa). The chain crosses the membrane as a helical span at residues 480–500; the sequence is IFLITLVSVVAAVGLFAGLFF. Residues 501–566 are Cytoplasmic-facing; sequence CVRNSLSLRN…MEMSGRNSGP (66 aa). Residues 521–566 are cytoplasmic tail; sequence GLNHGLGPGPGGNHGAPHRPRWSPNWFWRRPVSSIAMEMSGRNSGP.

In terms of processing, O-glycosylated. Expressed in lung, large intestine, thymus, and testis. Expressed in normal and malignant bronchial epithelial cells.

Its subcellular location is the cell membrane. The sequence is that of Mucin-21 (MUC21) from Homo sapiens (Human).